The primary structure comprises 397 residues: Tryptophan synthase beta chain (397 aa).

At K87 the chain carries N6-(pyridoxal phosphate)lysine.

It belongs to the TrpB family. Tetramer of two alpha and two beta chains. The cofactor is pyridoxal 5'-phosphate.

It carries out the reaction (1S,2R)-1-C-(indol-3-yl)glycerol 3-phosphate + L-serine = D-glyceraldehyde 3-phosphate + L-tryptophan + H2O. Its pathway is amino-acid biosynthesis; L-tryptophan biosynthesis; L-tryptophan from chorismate: step 5/5. In terms of biological role, the beta subunit is responsible for the synthesis of L-tryptophan from indole and L-serine. This chain is Tryptophan synthase beta chain, found in Salmonella arizonae (strain ATCC BAA-731 / CDC346-86 / RSK2980).